The sequence spans 440 residues: ATP-dependent RNA helicase sub2 (440 aa).

A compositionally biased stretch (acidic residues) spans 1-16; sequence MSHEEDLIDYSDEELQ. Residues 1 to 42 are disordered; that stretch reads MSHEEDLIDYSDEELQTTDAAATTAAPASNGEAKKGDLTVSG. Residues 17-28 are compositionally biased toward low complexity; the sequence is TTDAAATTAAPA. Residues 57-85 carry the Q motif motif; that stretch reads TGFRDFLLKEELLRAITDCGFEHPSEVQQ. The region spanning 88–263 is the Helicase ATP-binding domain; the sequence is IPTAILNVDV…KKFMRNPLEV (176 aa). Residue 101 to 108 coordinates ATP; it reads AKSGLGKT. Positions 210-213 match the DEAD box motif; it reads DECD. The 146-residue stretch at 291 to 436 folds into the Helicase C-terminal domain; sequence KLNELLDSLE…EYPEGGVDSS (146 aa).

The protein belongs to the DEAD box helicase family. DECD subfamily.

It is found in the nucleus. The catalysed reaction is ATP + H2O = ADP + phosphate + H(+). Functionally, ATP-binding RNA helicase involved in transcription elongation and required for the export of mRNA out of the nucleus. SUB2 also plays a role in pre-mRNA splicing and spliceosome assembly. May be involved in rDNA and telomeric silencing, and maintenance of genome integrity. The polypeptide is ATP-dependent RNA helicase sub2 (sub2) (Aspergillus niger (strain ATCC MYA-4892 / CBS 513.88 / FGSC A1513)).